Reading from the N-terminus, the 401-residue chain is Imidazolonepropionase (401 aa).

Positions 66 and 68 each coordinate Fe(3+). Residues His66 and His68 each coordinate Zn(2+). Positions 75, 138, and 171 each coordinate 4-imidazolone-5-propanoate. Tyr138 contacts N-formimidoyl-L-glutamate. His236 lines the Fe(3+) pocket. His236 contributes to the Zn(2+) binding site. Gln239 contributes to the 4-imidazolone-5-propanoate binding site. Asp311 is a Fe(3+) binding site. Asp311 serves as a coordination point for Zn(2+). The N-formimidoyl-L-glutamate site is built by Asn313 and Gly315. Thr316 contacts 4-imidazolone-5-propanoate.

The protein belongs to the metallo-dependent hydrolases superfamily. HutI family. Zn(2+) serves as cofactor. Requires Fe(3+) as cofactor.

It is found in the cytoplasm. It carries out the reaction 4-imidazolone-5-propanoate + H2O = N-formimidoyl-L-glutamate. It participates in amino-acid degradation; L-histidine degradation into L-glutamate; N-formimidoyl-L-glutamate from L-histidine: step 3/3. Catalyzes the hydrolytic cleavage of the carbon-nitrogen bond in imidazolone-5-propanoate to yield N-formimidoyl-L-glutamate. It is the third step in the universal histidine degradation pathway. The sequence is that of Imidazolonepropionase from Pseudomonas syringae pv. tomato (strain ATCC BAA-871 / DC3000).